The sequence spans 692 residues: Elongation factor G (692 aa).

One can recognise a tr-type G domain in the interval 8 to 282; sequence ENTRNIGIMA…GVVDYLPSPV (275 aa). GTP contacts are provided by residues 17–24, 81–85, and 135–138; these read AHIDAGKT, DTPGH, and NKMD.

The protein belongs to the TRAFAC class translation factor GTPase superfamily. Classic translation factor GTPase family. EF-G/EF-2 subfamily.

The protein resides in the cytoplasm. Its function is as follows. Catalyzes the GTP-dependent ribosomal translocation step during translation elongation. During this step, the ribosome changes from the pre-translocational (PRE) to the post-translocational (POST) state as the newly formed A-site-bound peptidyl-tRNA and P-site-bound deacylated tRNA move to the P and E sites, respectively. Catalyzes the coordinated movement of the two tRNA molecules, the mRNA and conformational changes in the ribosome. The chain is Elongation factor G from Anoxybacillus flavithermus (strain DSM 21510 / WK1).